The following is a 375-amino-acid chain: Trans-enoyl reductase cghC (375 aa).

48–51 is an NADP(+) binding site; sequence VDTK. Residue 135–142 participates in substrate binding; the sequence is NAWYTSGW. NADP(+)-binding positions include 188-191, 211-214, and 276-277; these read SSST, SARN, and LD. 297–301 contacts substrate; it reads GPELV. NADP(+) is bound at residue 366-367; it reads VS.

The protein belongs to the zinc-containing alcohol dehydrogenase family. Monomer.

It carries out the reaction (2S,4S)-4-hydroxy-4-methylglutamate + 8 malonyl-CoA + 3 S-adenosyl-L-methionine + ATP + 8 NADPH + 11 H(+) = (2S)-3-[(2S)-3,5-dioxo-4-[(2E,4R,6R,8E,10E,12E)-4,6,12-trimethyltetradeca-2,8,10,12-tetraenoyl]pyrrolidin-2-yl]-2-hydroxy-2-methylpropanoate + AMP + 3 S-adenosyl-L-homocysteine + 8 CO2 + diphosphate + 8 NADP(+) + 8 CoA + 6 H2O. Its pathway is secondary metabolite biosynthesis. Trans-enoyl reductase; part of the gene cluster that mediates the biosynthesis of the tetramic acid Sch210972, a potential anti-HIV fungal natural product that contains a decalin core. The PKS module of cghG together with the enoylreductase cghC catalyze the formation of the polyketide unit which is then conjugated to 4-hydroxyl-4-methyl glutamate (HMG) by the condensation domain of the cghG NRPS module. One unique structural feature of Sch210972 is the tetramic acid motif proposed to be derived from the non-proteinogenic amino acid HMG, by a Dieckmann-type condensation catalyzed by the reductase domain of cghG. The aldolase cghB catalyzes the aldol condensation of 2 molecules of pyruvic acid to yield the intermediate 4-hydroxyl-4-methyl-2-oxoglutarate (HMOG), which can then be stereoselectively transaminated by an unidentified enzyme to form HMG. The Diels-Alderase cghA then uses the Dieckmann product released by cghG as substrate and catalyzes the Diels-Alder cycloaddition to form the decalin ring of Sch210972. CghA also suppresses the nonenzymatic formation of the alternative stereoisomer. This Chaetomium globosum (strain ATCC 6205 / CBS 148.51 / DSM 1962 / NBRC 6347 / NRRL 1970) (Soil fungus) protein is Trans-enoyl reductase cghC.